We begin with the raw amino-acid sequence, 279 residues long: Undecaprenyl-diphosphatase (279 aa).

7 helical membrane passes run 10 to 30, 48 to 68, 96 to 116, 128 to 148, 203 to 223, 229 to 249, and 259 to 279; these read FICF…FLPI, LGVS…IYYF, LFIY…LIKL, GLFS…LSEI, SFLV…FSLF, IDII…IFAI, and NNTL…LTTL.

Belongs to the UppP family.

Its subcellular location is the cell inner membrane. It catalyses the reaction di-trans,octa-cis-undecaprenyl diphosphate + H2O = di-trans,octa-cis-undecaprenyl phosphate + phosphate + H(+). Functionally, catalyzes the dephosphorylation of undecaprenyl diphosphate (UPP). Confers resistance to bacitracin. This chain is Undecaprenyl-diphosphatase, found in Prochlorococcus marinus (strain NATL1A).